Reading from the N-terminus, the 701-residue chain is MDSSSSSSSAAARRRINAIHSHLVTSSRSSPLLRSNPTAGEFCLDNGYSVVLPEKLNTGSWNVYRSAKSPFKLVSRFPDHPDIATLHDNFEHAVHDFRDYKYLGTRVRVDGTVGDYKWMTYGEAGTARTALGSGLVHHGIPMGSSVGIYFINRPEWLIVDHACSSYSYVSVPLYDTLGPDAVKFIVNHATVQAIFCVAETLNSLLSCLSEMPSVRLVVVVGGLIESLPSLPSSSGVKVVSYSVLLNQGRSNPQRFFPPKPDDVATICYTSGTTGTPKGVVLTHANLIANVAGSSFSVKFFSSDVYISYLPLAHIYERANQILTVYFGVAVGFYQGDNMKLLDDLAALRPTVFSSVPRLYNRIYAGIINAVKTSGGLKERLFNAAYNAKKQALLNGKSASPIWDRLVFNKIKDRLGGRVRFMTSGASPLSPEVMEFLKVCFGGRVTEGYGMTETSCVISGMDEGDNLTGHVGSPNPACEVKLVDVPEMNYTSADQPHPRGEICVRGPIIFTGYYKDEIQTKEVIDEDGWLHTGDIGLWLPGGRLKIIDRKKNIFKLAQGEYIAPEKIENVYAKCKFVGQCFIYGDSFNSSLVAVVSVDPDVLKSWAASEGIKGGDLRELCNNPRVKAAVLSDMDTVGREAQLRGFEFAKAVTLVLEPFTLENGLLTPTFKIKRPQAKEYFAEAITNMYKELGASDPSANRGL.

A propeptide spans 1-38 (MDSSSSSSSAAARRRINAIHSHLVTSSRSSPLLRSNPT) (removed in mature form). A Microbody targeting signal motif is present at residues 15–23 (RINAIHSHL). Residue 266-277 (ICYTSGTTGTPK) participates in ATP binding. The tract at residues 526-550 (DGWLHTGDIGLWLPGGRLKIIDRKK) is fatty acid-binding.

The protein belongs to the ATP-dependent AMP-binding enzyme family. Mg(2+) serves as cofactor. As to expression, expressed in roots, stems, leaves flowers and germinating seedling. Preferentially expressed in seeds and senescent leaves.

It is found in the peroxisome. Its subcellular location is the glyoxysome membrane. The catalysed reaction is a long-chain fatty acid + ATP + CoA = a long-chain fatty acyl-CoA + AMP + diphosphate. It catalyses the reaction tetradecanoate + ATP + CoA = tetradecanoyl-CoA + AMP + diphosphate. It carries out the reaction hexadecanoate + ATP + CoA = hexadecanoyl-CoA + AMP + diphosphate. The enzyme catalyses (9Z)-octadecenoate + ATP + CoA = (9Z)-octadecenoyl-CoA + AMP + diphosphate. The catalysed reaction is (9Z,12Z)-octadecadienoate + ATP + CoA = (9Z,12Z)-octadecadienoyl-CoA + AMP + diphosphate. It catalyses the reaction (9Z,12Z,15Z)-octadecatrienoate + ATP + CoA = (9Z,12Z,15Z)-octadecatrienoyl-CoA + AMP + diphosphate. The protein operates within lipid metabolism; fatty acid metabolism. Its function is as follows. Activation of long-chain fatty acids for both synthesis of cellular lipids, and degradation via beta-oxidation. Preferentially uses palmitate, palmitoleate, oleate, linoleate and eicosenoate as substrates. Can use myristate and linolenate as substrates. May play a regulatory role both in fatty acid import into glyoxysomes and in fatty acid beta-oxidation. Functions redundantly with LACS7 in lipid mobilization for beta-oxidation during seed germination, which is essential for postgerminative growth and seedling establishment. The polypeptide is Long chain acyl-CoA synthetase 6, peroxisomal (Arabidopsis thaliana (Mouse-ear cress)).